We begin with the raw amino-acid sequence, 122 residues long: Interferon alpha-inducible protein 27, mitochondrial (122 aa).

Residues 1-33 (MEASALTSSAVTSVAKVVRVASGSAVVLPLARI) constitute a mitochondrion transit peptide. Residues 34–57 (ATVVIGGVVAMAAVPMVLSAMGFT) traverse the membrane as a helical segment. Residue Lys69 forms a Glycyl lysine isopeptide (Lys-Gly) (interchain with G-Cter in ubiquitin) linkage. A run of 2 helical transmembrane segments spans residues 71–91 (MSAA…VATL) and 99–119 (LSGL…AVIA). A mediates interaction with SKP2 and hepatitis C virus non-structural protein NS5A region spans residues 76-122 (IANGGGVASGSLVATLQSLGATGLSGLTKFILGSIGSAIAAVIARFY). Positions 103-112 (TKFILGSIGS) are required for hepatitis C virus non-structural protein NS5A degradation.

The protein belongs to the IFI6/IFI27 family. In terms of assembly, homodimer. Interacts with hepatitis C virus/HCV non-structural protein NS5A; promotes the ubiquitin-mediated proteasomal degradation of NS5A. Interacts with SKP2; promotes the ubiquitin-mediated proteasomal degradation of NS5A. Interacts with NR4A1. May interact with BCL2. Post-translationally, ubiquitinated by TRIM21 via 'Lys-6'-linked ubiquitin chains leading to IFI27 mitochondrial migration.

The protein resides in the mitochondrion membrane. The protein localises to the nucleus inner membrane. It localises to the endoplasmic reticulum membrane. In terms of biological role, probable adapter protein involved in different biological processes. Part of the signaling pathways that lead to apoptosis. Involved in type-I interferon-induced apoptosis characterized by a rapid and robust release of cytochrome C from the mitochondria and activation of BAX and caspases 2, 3, 6, 8 and 9. Also functions in TNFSF10-induced apoptosis. May also have a function in the nucleus, where it may be involved in the interferon-induced negative regulation of the transcriptional activity of NR4A1, NR4A2 and NR4A3 through the enhancement of XPO1-mediated nuclear export of these nuclear receptors. May thereby play a role in the vascular response to injury. In the innate immune response, has an antiviral activity towards hepatitis C virus/HCV. May prevent the replication of the virus by recruiting both the hepatitis C virus non-structural protein 5A/NS5A and the ubiquitination machinery via SKP2, promoting the ubiquitin-mediated proteasomal degradation of NS5A. Also promotes virus-induced pyroptosis by activating CASP3 in the mitochondria after 'Lys-6'-linked ubiquitination by TRIM21. This chain is Interferon alpha-inducible protein 27, mitochondrial, found in Homo sapiens (Human).